Here is a 180-residue protein sequence, read N- to C-terminus: LDLR chaperone boca (180 aa).

Residues 1–18 (MQTRLVLLLLALTPLVLA) form the signal peptide. Residues 48–61 (QWEEDEEPLEDDEL) are compositionally biased toward acidic residues. The disordered stretch occupies residues 48 to 78 (QWEEDEEPLEDDELPEHLRPQPKLDLSNLDS). The segment at 93 to 166 (TLMTFVSVTG…QERCKGVTIE (74 aa)) is structured core. The Prevents secretion from ER signature appears at 177–180 (KDEL).

The protein belongs to the MESD family. Monomer. Interacts with Arrow and Yolkless.

The protein localises to the endoplasmic reticulum. Functionally, chaperone specifically assisting the folding of beta-propeller/EGF modules within the family of low-density lipoprotein receptors (LDLRs). Acts as a modulator of the Wg pathway, since some LDLRs are coreceptors for the canonical Wnt pathway. The polypeptide is LDLR chaperone boca (boca) (Drosophila melanogaster (Fruit fly)).